Consider the following 69-residue polypeptide: UPF0346 protein llmg_2280 (69 aa).

Belongs to the UPF0346 family.

The protein is UPF0346 protein llmg_2280 of Lactococcus lactis subsp. cremoris (strain MG1363).